A 1370-amino-acid chain; its full sequence is MDPSDFPSPFDPLTLPEKPLAGDLPVDMEFGEDLLESQTAPSRGWAPPGPSPSSGALDLLDTPSGLEKDPGGVLDGATELLGLGGLLYKAPSPPEVDHGPEGTLAWDSGEQTLEPGPGCQTPEVMPPDPGAGASPPSPEGLLEPLAPDSPIILESPHIEEEIPPLATRRRGSPGQEEEHTQGQPQSPNAPPSPSVGETLGDGINSSQSKPGVCTPTAHPSLPGDGLTGKEIEKPPERVQKRSERVRRAEPPKPEVVDSTESIPVSDEDSDAMVDDPNDEDFVPFRPRRSPRMSLRSSMAQRAGRSSMGTKMSCAHCRTPLQKGQTAYQRKGLPQLFCSSSCLTTYSKKPLGRKTCTFCKKEIWNTKDSVVVQTGPGGSFHEFCTSVCLSLYEAQQQRPIPQSGDPADATRCSICQKTGEVLHEVSNGSVVHRLCSDSCFSKFRANKGLKTNCCDQCGAYIYARPGGLGPELLFHDGQQKRFCNTTCLGAYKKKNTRVYPCVWCKTLCKNFEMLSHVDRNGKTSLFCSLCCTTSYKVKQAGLTGPPRPCSFCRRSLSDPCYYNKVDRTVYQFCSPSCWTKFQHTSPEGGIHLSCHYCHSLFSGKPEVLEWQDQVFQFCCRDCCEDFKRLRGVVSQCEHCRQEKLLHEKLRFSGVEKSFCSEGCVLLYKQDFTKKLGLCCITCTYCSQTCQRGVTEQLDGSTWDFCSEDCKTKYLLWYCKAARCHACKRQGKLLETIHWRGQIRHFCNQQCLLRFYSQQNQPNLDTQSGPESLLNSQSSESKPQTPSQTKVENNHTVRTPDENGNLGKTPVKRATPSVPTPPPPPPPATPRKNKAAMCKPLMQNRGVSCKAEMKSKGSQTEEWKPQVIVLPIPVPIFVPVPMHLYCQKVPVPFSMPIPVPVPMFLPTTLESTEKIVETIEELKVKIPSNPLEADILAMAEMIAEAEELDKASSDLCDLVSNQSAEGLLEDCDLFGTARDDVLAMAVKMANVLDEPGQDLEADFPKNPLDINPSVDFLFDCGLVGPEDVSTEQDLPRAMRKGQKRLMLSESCSRDSLSSQPSCTGLNYSYGVNAWKCWVQSKYANGETSKGDELRFGPKPMRIKEDILACSAAELNYGLAQFVREITRPNGERYEPDSIYYLCLGIQQYLLENNRMVNIFTDLYYLTFVQELNKSLSTWQPTLLPNNTVFSRVEEEHLWECKQLGVYSPFVLLNTLMFFNTKFFGLQTAEEHMQLSFTNVVRQSRKCTTPRGTTKVVSIRYYAPVRQRKGRDTGPGKRKREDETILEQRENRMNPLRCPVKFYEFYLSKCPESLRTRNDVFYLQPERSCIAESPLWYSVIPMDRSMLESMLNRILAVREIYEELGRPGEEDLD.

Composition is skewed to low complexity over residues 1-12 (MDPSDFPSPFDP), 40-56 (APSRGWAPPGPSPSSGA), and 130-146 (GAGASPPSPEGLLEPLA). Disordered regions lie at residues 1–73 (MDPS…PGGV) and 85–310 (GLLY…MGTK). Residues 227–255 (TGKEIEKPPERVQKRSERVRRAEPPKPEV) show a composition bias toward basic and acidic residues. Residues S265 and S269 each carry the phosphoserine modification. Over residues 265–281 (SDEDSDAMVDDPNDEDF) the composition is skewed to acidic residues. Glycyl lysine isopeptide (Lys-Gly) (interchain with G-Cter in SUMO2) cross-links involve residues K310, K322, and K330. MYM-type zinc fingers lie at residues 334–368 (QLFCSSSCLTTYSKKPLGRKTCTFCKKEIWNTKDS), 380–424 (HEFC…LHEV), 431–466 (HRLCSDSCFSKFRANKGLKTNCCDQCGAYIYARPGG), 479–513 (KRFCNTTCLGAYKKKNTRVYPCVWCKTLCKNFEML), 523–561 (SLFCSLCCTTSYKVKQAGLTGPPRPCSFCRRSLSDPCYY), 569–606 (YQFCSPSCWTKFQHTSPEGGIHLSCHYCHSLFSGKPEV), 614–648 (FQFCCRDCCEDFKRLRGVVSQCEHCRQEKLLHEKL), 655–694 (KSFCSEGCVLLYKQDFTKKLGLCCITCTYCSQTCQRGVTE), and 701–735 (WDFCSEDCKTKYLLWYCKAARCHACKRQGKLLETI). Over residues 761–789 (NLDTQSGPESLLNSQSSESKPQTPSQTKV) the composition is skewed to polar residues. A disordered region spans residues 761–831 (NLDTQSGPES…PPPPATPRKN (71 aa)). Residues K780 and K788 each participate in a glycyl lysine isopeptide (Lys-Gly) (interchain with G-Cter in SUMO2) cross-link. A compositionally biased stretch (basic and acidic residues) spans 790 to 799 (ENNHTVRTPD). T797 is subject to Phosphothreonine. K806 is covalently cross-linked (Glycyl lysine isopeptide (Lys-Gly) (interchain with G-Cter in SUMO2)). Residues 816-827 (VPTPPPPPPPAT) are compositionally biased toward pro residues. 2 positions are modified to phosphothreonine: T818 and T827. Residues K848, K862, K921, and K1276 each participate in a glycyl lysine isopeptide (Lys-Gly) (interchain with G-Cter in SUMO2) cross-link.

As to quaternary structure, may be a component of a BHC histone deacetylase complex that contains HDAC1, HDAC2, HMG20B/BRAF35, KDM1A, RCOR1/CoREST, PHF21A/BHC80, ZMYM2, ZNF217, ZMYM3, GSE1 and GTF2I. Ubiquitously expressed in all embryonic stages and adult tissues.

Its subcellular location is the nucleus. Functionally, plays a role in the regulation of cell morphology and cytoskeletal organization. This Mus musculus (Mouse) protein is Zinc finger MYM-type protein 3 (Zmym3).